A 1091-amino-acid chain; its full sequence is Isoleucine--tRNA ligase (1091 aa).

A 'HIGH' region motif is present at residues 48–58 (PFATGLPHFGH). A 'KMSKS' region motif is present at residues 625-629 (KMSKA). Lys628 contacts ATP.

The protein belongs to the class-I aminoacyl-tRNA synthetase family. IleS type 2 subfamily. Monomer. Requires Zn(2+) as cofactor.

It localises to the cytoplasm. The catalysed reaction is tRNA(Ile) + L-isoleucine + ATP = L-isoleucyl-tRNA(Ile) + AMP + diphosphate. Its function is as follows. Catalyzes the attachment of isoleucine to tRNA(Ile). As IleRS can inadvertently accommodate and process structurally similar amino acids such as valine, to avoid such errors it has two additional distinct tRNA(Ile)-dependent editing activities. One activity is designated as 'pretransfer' editing and involves the hydrolysis of activated Val-AMP. The other activity is designated 'posttransfer' editing and involves deacylation of mischarged Val-tRNA(Ile). This chain is Isoleucine--tRNA ligase, found in Treponema pallidum (strain Nichols).